A 208-amino-acid chain; its full sequence is MEPVKMTNSSDDFTQSAEPFKLFAEWLADAAKSEPNDPNAVALATVDPDGLPNVRMVLLKDFDETGFVFYTNYESKKGQEILSAEKAAMCFHWKSLRRQVRVRGPVEKVSDAEADAYYASRPRGSRIGAWASKQSRPLESRFALEKAVAEYTAKYAIGDIPRPPYWSGFRIRPVSIEFWHDRPFRLHDRVLFTRPTPEGDWNKDRLYP.

Residues Arg55–Lys60, Tyr70–Thr71, Lys76, Lys77, and Gln99 each bind FMN. Lys60 provides a ligand contact to substrate. Substrate is bound by residues Tyr117, Arg121, and Ser125. Residues Gln134–Ser135 and Trp179 each bind FMN. Arg185–His187 contributes to the substrate binding site. Arg189 contacts FMN.

It belongs to the pyridoxamine 5'-phosphate oxidase family. As to quaternary structure, homodimer. The cofactor is FMN.

The enzyme catalyses pyridoxamine 5'-phosphate + O2 + H2O = pyridoxal 5'-phosphate + H2O2 + NH4(+). It catalyses the reaction pyridoxine 5'-phosphate + O2 = pyridoxal 5'-phosphate + H2O2. The protein operates within cofactor metabolism; pyridoxal 5'-phosphate salvage; pyridoxal 5'-phosphate from pyridoxamine 5'-phosphate: step 1/1. Its pathway is cofactor metabolism; pyridoxal 5'-phosphate salvage; pyridoxal 5'-phosphate from pyridoxine 5'-phosphate: step 1/1. Functionally, catalyzes the oxidation of either pyridoxine 5'-phosphate (PNP) or pyridoxamine 5'-phosphate (PMP) into pyridoxal 5'-phosphate (PLP). The polypeptide is Pyridoxine/pyridoxamine 5'-phosphate oxidase (Brucella abortus biovar 1 (strain 9-941)).